The primary structure comprises 265 residues: Cytochrome c oxidase subunit 3 (265 aa).

The next 6 helical transmembrane spans lie at proline 16 to methionine 36, glycine 41 to tryptophan 61, glycine 81 to phenylalanine 101, alanine 162 to methionine 182, phenylalanine 200 to valine 220, and tryptophan 245 to isoleucine 265.

This sequence belongs to the cytochrome c oxidase subunit 3 family. As to quaternary structure, component of the cytochrome c oxidase (complex IV, CIV), a multisubunit enzyme composed of a catalytic core of 3 subunits and several supernumerary subunits. The complex exists as a monomer or a dimer and forms supercomplexes (SCs) in the inner mitochondrial membrane with ubiquinol-cytochrome c oxidoreductase (cytochrome b-c1 complex, complex III, CIII).

It is found in the mitochondrion inner membrane. The catalysed reaction is 4 Fe(II)-[cytochrome c] + O2 + 8 H(+)(in) = 4 Fe(III)-[cytochrome c] + 2 H2O + 4 H(+)(out). Component of the cytochrome c oxidase, the last enzyme in the mitochondrial electron transport chain which drives oxidative phosphorylation. The respiratory chain contains 3 multisubunit complexes succinate dehydrogenase (complex II, CII), ubiquinol-cytochrome c oxidoreductase (cytochrome b-c1 complex, complex III, CIII) and cytochrome c oxidase (complex IV, CIV), that cooperate to transfer electrons derived from NADH and succinate to molecular oxygen, creating an electrochemical gradient over the inner membrane that drives transmembrane transport and the ATP synthase. Cytochrome c oxidase is the component of the respiratory chain that catalyzes the reduction of oxygen to water. Electrons originating from reduced cytochrome c in the intermembrane space (IMS) are transferred via the dinuclear copper A center (CU(A)) of subunit 2 and heme A of subunit 1 to the active site in subunit 1, a binuclear center (BNC) formed by heme A3 and copper B (CU(B)). The BNC reduces molecular oxygen to 2 water molecules using 4 electrons from cytochrome c in the IMS and 4 protons from the mitochondrial matrix. This chain is Cytochrome c oxidase subunit 3 (COX3), found in Helianthus annuus (Common sunflower).